A 79-amino-acid polypeptide reads, in one-letter code: Small ribosomal subunit protein uS17 (79 aa).

This sequence belongs to the universal ribosomal protein uS17 family. In terms of assembly, part of the 30S ribosomal subunit.

In terms of biological role, one of the primary rRNA binding proteins, it binds specifically to the 5'-end of 16S ribosomal RNA. In Paramagnetospirillum magneticum (strain ATCC 700264 / AMB-1) (Magnetospirillum magneticum), this protein is Small ribosomal subunit protein uS17.